A 289-amino-acid chain; its full sequence is ATP synthase gamma chain (289 aa).

It belongs to the ATPase gamma chain family. In terms of assembly, F-type ATPases have 2 components, CF(1) - the catalytic core - and CF(0) - the membrane proton channel. CF(1) has five subunits: alpha(3), beta(3), gamma(1), delta(1), epsilon(1). CF(0) has three main subunits: a, b and c.

The protein resides in the cell inner membrane. Functionally, produces ATP from ADP in the presence of a proton gradient across the membrane. The gamma chain is believed to be important in regulating ATPase activity and the flow of protons through the CF(0) complex. The sequence is that of ATP synthase gamma chain from Anaeromyxobacter dehalogenans (strain 2CP-C).